A 181-amino-acid chain; its full sequence is Adenine phosphoribosyltransferase (181 aa).

The protein belongs to the purine/pyrimidine phosphoribosyltransferase family. As to quaternary structure, homodimer.

The protein resides in the cytoplasm. The catalysed reaction is AMP + diphosphate = 5-phospho-alpha-D-ribose 1-diphosphate + adenine. Its pathway is purine metabolism; AMP biosynthesis via salvage pathway; AMP from adenine: step 1/1. Functionally, catalyzes a salvage reaction resulting in the formation of AMP, that is energically less costly than de novo synthesis. The sequence is that of Adenine phosphoribosyltransferase from Chromohalobacter salexigens (strain ATCC BAA-138 / DSM 3043 / CIP 106854 / NCIMB 13768 / 1H11).